The primary structure comprises 496 residues: Solute carrier family 2, facilitated glucose transporter member 3 (496 aa).

At 1-10 the chain is on the cytoplasmic side; it reads MGTQKVTPAL. The chain crosses the membrane as a helical span at residues 11 to 32; the sequence is IFAITVATIGSFQFGYNTGVIN. Residues 33–64 lie on the Extracellular side of the membrane; sequence APEKIIKEFINKTLTDKGNAPPSEVLLTSLWS. An N-linked (GlcNAc...) asparagine glycan is attached at asparagine 43. Residues 65–85 form a helical membrane-spanning segment; sequence LSVAIFSVGGMIGSFSVGLFV. Residues 86–90 lie on the Cytoplasmic side of the membrane; that stretch reads NRFGR. The chain crosses the membrane as a helical span at residues 91 to 111; the sequence is RNSMLIVNLLAVTGGCFMGLC. At 112–118 the chain is on the extracellular side; that stretch reads KVAKSVE. Residues 119-142 form a helical membrane-spanning segment; that stretch reads MLILGRLVIGLFCGLCTGFVPMYI. The Cytoplasmic segment spans residues 143–153; that stretch reads GEISPTALRGA. The chain crosses the membrane as a helical span at residues 154–174; sequence FGTLNQLGIVVGILVAQIFGL. Residue glutamine 159 coordinates D-glucose. Residues 175 to 183 lie on the Extracellular side of the membrane; it reads EFILGSEEL. A helical transmembrane segment spans residues 184 to 204; the sequence is WPLLLGFTILPAILQSAALPF. The Cytoplasmic portion of the chain corresponds to 205–269; the sequence is CPESPRFLLI…LFRVSSYRQP (65 aa). Threonine 232 is modified (phosphothreonine). Residues 270–290 traverse the membrane as a helical segment; sequence IIISIVLQLSQQLSGINAVFY. Residues 277–279 form an important for selectivity against fructose region; that stretch reads QLS. Residues 280–281 and asparagine 286 contribute to the D-glucose site; that span reads QQ. The Extracellular segment spans residues 291 to 304; that stretch reads YSTGIFKDAGVQEP. The chain crosses the membrane as a helical span at residues 305–325; sequence IYATIGAGVVNTIFTVVSLFL. Residue asparagine 315 participates in D-glucose binding. Over 326–331 the chain is Cytoplasmic; it reads VERAGR. A helical membrane pass occupies residues 332 to 352; sequence RTLHMIGLGGMAFCSTLMTVS. Residues 353–363 are Extracellular-facing; the sequence is LLLKDNYNGMS. Residues 364-389 traverse the membrane as a helical segment; the sequence is FVCIGAILVFVAFFEIGPGPIPWFIV. Residues glutamate 378 and tryptophan 386 each contribute to the D-glucose site. The Cytoplasmic portion of the chain corresponds to 390–399; it reads AELFSQGPRP. A helical membrane pass occupies residues 400-420; the sequence is AAMAVAGCSNWTSNFLVGLLF. The Extracellular segment spans residues 421-429; it reads PSAAHYLGA. Residues 430-450 form a helical membrane-spanning segment; it reads YVFIIFTGFLITFLAFTFFKV. Residues 451–496 are Cytoplasmic-facing; that stretch reads PETRGRTFEDITRAFEGQAHGADRSGKDGVMEMNSIEPAKETTTNV. Residues serine 475 and serine 485 each carry the phosphoserine modification. Threonine 492 bears the Phosphothreonine mark.

The protein belongs to the major facilitator superfamily. Sugar transporter (TC 2.A.1.1) family. Glucose transporter subfamily. As to quaternary structure, interacts with SMIM43; the interaction may promote SLC2A3-mediated glucose transport to meet the energy needs of mesendoderm differentiation. In terms of tissue distribution, highly expressed in brain. Expressed in many tissues.

The protein localises to the cell membrane. Its subcellular location is the perikaryon. The protein resides in the cell projection. The catalysed reaction is D-glucose(out) = D-glucose(in). It carries out the reaction D-galactose(in) = D-galactose(out). Its activity is regulated as follows. Deoxyglucose transport is inhibited by D-glucose, D-galactose and maltose. Galactose transport is inhibited by D-glucose and maltose. Functionally, facilitative glucose transporter. Can also mediate the uptake of various other monosaccharides across the cell membrane. Mediates the uptake of glucose, 2-deoxyglucose, galactose, mannose, xylose and fucose, and probably also dehydroascorbate. Does not mediate fructose transport. Required for mesendoderm differentiation. The protein is Solute carrier family 2, facilitated glucose transporter member 3 of Homo sapiens (Human).